The sequence spans 398 residues: Nocardicin C N-oxygenase (398 aa).

A disordered region spans residues 63-90 (RARAAGREETPRVTPEAAPAGSMLSMDP). Residues H93, R97, R289, H345, and C347 each coordinate heme.

It belongs to the cytochrome P450 family. The cofactor is heme.

It carries out the reaction nocardicin C + 4 reduced [2Fe-2S]-[ferredoxin] + 2 O2 + 2 H(+) = nocardicin A + 4 oxidized [2Fe-2S]-[ferredoxin] + 3 H2O. The protein operates within antibiotic biosynthesis. In terms of biological role, involved in the biosynthesis of the beta-lactam antibiotic nocardicin A. Catalyzes the conversion of nocardicin C to nocardicin A. Cannot use nocardicin G. The protein is Nocardicin C N-oxygenase of Nocardia uniformis subsp. tsuyamanensis.